A 295-amino-acid chain; its full sequence is 15-cis-phytoene synthase (295 aa).

The protein belongs to the phytoene/squalene synthase family. ATP is required as a cofactor. Requires Mn(2+) as cofactor.

The catalysed reaction is 2 (2E,6E,10E)-geranylgeranyl diphosphate = 15-cis-phytoene + 2 diphosphate. It participates in carotenoid biosynthesis; phytoene biosynthesis. Its activity is regulated as follows. Significant inhibition is seen at GGPP concentrations above 100 uM. Functionally, involved in the biosynthesis of carotenoids. Catalyzes stereoselectively the condensation of two molecules of geranylgeranyl diphosphate (GGPP) to give prephytoene diphosphate (PPPP) and the subsequent rearrangement of the cyclopropylcarbinyl intermediate to yield 15-cis-phytoene. This is 15-cis-phytoene synthase (crtB) from Enterobacter agglomerans (Erwinia herbicola).